A 470-amino-acid polypeptide reads, in one-letter code: Iron-sulfur cluster assembly SufBD family protein ABCI9 (470 aa).

Belongs to the iron-sulfur cluster assembly SufBD family.

This is Iron-sulfur cluster assembly SufBD family protein ABCI9 (ABCI9) from Arabidopsis thaliana (Mouse-ear cress).